Consider the following 149-residue polypeptide: Ribosome maturation factor RimP (149 aa).

The protein belongs to the RimP family.

The protein localises to the cytoplasm. In terms of biological role, required for maturation of 30S ribosomal subunits. The sequence is that of Ribosome maturation factor RimP from Clostridium acetobutylicum (strain ATCC 824 / DSM 792 / JCM 1419 / IAM 19013 / LMG 5710 / NBRC 13948 / NRRL B-527 / VKM B-1787 / 2291 / W).